The following is a 232-amino-acid chain: MQKNAAHTYAISSLLVLSLTGCAWIPSTPLVQGATSAQPVPGPTPVANGSIFQSAQPINYGYQPLFEDRRPRNIGDTLTIVLQENVSASKSSSVNASRDGKTNFGFDTVPRYLQGLFGNARADVEASGGNTFNGKGGANASNTFSGTLTVTVDQVLVNGNLHVVGEKQIAINQGTEFIRFSGVVNPRTISGSNTVSSTQVVDARIEYVGNGYINEAQNMGWLQRFFLNLSPM.

The signal sequence occupies residues 1–21; that stretch reads MQKNAAHTYAISSLLVLSLTG. Cysteine 22 carries N-palmitoyl cysteine lipidation. The S-diacylglycerol cysteine moiety is linked to residue cysteine 22.

The protein belongs to the FlgH family. In terms of assembly, the basal body constitutes a major portion of the flagellar organelle and consists of four rings (L,P,S, and M) mounted on a central rod.

It localises to the cell outer membrane. The protein resides in the bacterial flagellum basal body. Assembles around the rod to form the L-ring and probably protects the motor/basal body from shearing forces during rotation. The sequence is that of Flagellar L-ring protein from Shigella boydii serotype 18 (strain CDC 3083-94 / BS512).